Here is a 454-residue protein sequence, read N- to C-terminus: Protein disulfide-isomerase TMX3 (454 aa).

The first 24 residues, 1 to 24 (MAAWKSWAALRLCATVVLLDMVVC), serve as a signal peptide directing secretion. In terms of domain architecture, Thioredoxin spans 25–128 (KGFVEDLDES…KDDIIEFAHR (104 aa)). Residues 25–375 (KGFVEDLDES…TIVSIFKSSP (351 aa)) are Lumenal-facing. Residues Cys53 and Cys56 each act as nucleophile in the active site. An intrachain disulfide couples Cys53 to Cys56. N-linked (GlcNAc...) asparagine glycans are attached at residues Asn258 and Asn313. A helical transmembrane segment spans residues 376 to 396 (LMGCFLFGLPLGVISIMCYGI). Topologically, residues 397-454 (YTADTDGGYIEERYEVSKSENENQEQIEESKEQQEPSSGGSVVPTVQEPKDVLEKKKD) are cytoplasmic. Residues 412-454 (VSKSENENQEQIEESKEQQEPSSGGSVVPTVQEPKDVLEKKKD) form a disordered region. Over residues 444–454 (EPKDVLEKKKD) the composition is skewed to basic and acidic residues. A Di-lysine motif motif is present at residues 451–454 (KKKD).

The protein belongs to the protein disulfide isomerase family.

Its subcellular location is the endoplasmic reticulum membrane. The catalysed reaction is Catalyzes the rearrangement of -S-S- bonds in proteins.. In terms of biological role, probable disulfide isomerase, which participates in the folding of proteins containing disulfide bonds. May act as a dithiol oxidase. Acts as a regulator of endoplasmic reticulum-mitochondria contact sites via its ability to regulate redox signals. The sequence is that of Protein disulfide-isomerase TMX3 (TMX3) from Pongo abelii (Sumatran orangutan).